Reading from the N-terminus, the 404-residue chain is S-adenosylmethionine synthase (404 aa).

His17 lines the ATP pocket. Asp19 lines the Mg(2+) pocket. K(+) is bound at residue Glu45. Glu58 and Gln101 together coordinate L-methionine. The segment at 101 to 111 (QSADINRGVDR) is flexible loop. ATP is bound by residues 172–174 (DAK), 245–246 (RF), Asp254, 260–261 (RK), Ala277, and Lys281. Position 254 (Asp254) interacts with L-methionine. Position 285 (Lys285) interacts with L-methionine.

Belongs to the AdoMet synthase family. Homotetramer; dimer of dimers. Requires Mg(2+) as cofactor. It depends on K(+) as a cofactor.

It is found in the cytoplasm. It catalyses the reaction L-methionine + ATP + H2O = S-adenosyl-L-methionine + phosphate + diphosphate. Its pathway is amino-acid biosynthesis; S-adenosyl-L-methionine biosynthesis; S-adenosyl-L-methionine from L-methionine: step 1/1. Catalyzes the formation of S-adenosylmethionine (AdoMet) from methionine and ATP. The overall synthetic reaction is composed of two sequential steps, AdoMet formation and the subsequent tripolyphosphate hydrolysis which occurs prior to release of AdoMet from the enzyme. The chain is S-adenosylmethionine synthase from Chlorobium luteolum (strain DSM 273 / BCRC 81028 / 2530) (Pelodictyon luteolum).